Reading from the N-terminus, the 205-residue chain is MTKIVRSKYKASRRLGVSLWGDGKDAFNTRNYRPGQHGRNTMVKTSDYGLHLKAKQRIKCHYGRITEKQFRNIFGFAQKMKGNTGENFIGLLESRLDSIVYRMNIAPTIFSSRQLISHGHIKVNGKKADIASMRLKEGDVIEIKEASRQMGIIQESVSKQGQTTPDYVSFDVDSLSGKYLRVPTISDVRYPFTPEVHLVVELYSR.

Positions 94–172 (SRLDSIVYRM…TTPDYVSFDV (79 aa)) constitute an S4 RNA-binding domain.

It belongs to the universal ribosomal protein uS4 family. Part of the 30S ribosomal subunit. Contacts protein S5. The interaction surface between S4 and S5 is involved in control of translational fidelity.

Its function is as follows. One of the primary rRNA binding proteins, it binds directly to 16S rRNA where it nucleates assembly of the body of the 30S subunit. With S5 and S12 plays an important role in translational accuracy. This Rickettsia bellii (strain OSU 85-389) protein is Small ribosomal subunit protein uS4.